Reading from the N-terminus, the 876-residue chain is Pre-mRNA-splicing factor ATP-dependent RNA helicase-like protein PRP2 (876 aa).

Residues 1–111 (MSSITSETGK…KGLLGDSENE (111 aa)) are disordered. Serine 2 bears the N-acetylserine mark. Residues 61-70 (VFSNTNQGPE) show a composition bias toward polar residues. In terms of domain architecture, Helicase ATP-binding spans 233–399 (LQEIKKNQVL…FDNCPIFNVP (167 aa)). ATP is bound at residue 246–253 (GETGSGKT). The DEAH box signature appears at 346 to 349 (DEAH). The Helicase C-terminal domain maps to 424–598 (TIFQIHTTQS…NTVLLLLSLG (175 aa)).

Belongs to the DEAD box helicase family. DEAH subfamily. In terms of assembly, interacts directly with pre-mRNA. According to PubMed:2251118, associated with spliceosomes prior to and throughout step 1 of the splicing reaction. According to PubMed:8943336, it leaves the spliceosome before reaction 1. Interacts with SPP2.

The protein localises to the nucleus. The enzyme catalyses ATP + H2O = ADP + phosphate + H(+). Its function is as follows. Involved in pre-mRNA splicing. Is required together with ATP and at least one other factor, for the first cleavage-ligation reaction. Functions as a molecular motor in the activation of the precatalytic spliceosome for the first transesterification reaction of pre-mRNA splicing by hydrolyzing ATP to cause the activation of the spliceosome without the occurrence of splicing. Capable of hydrolyzing nucleoside triphosphates in the presence of single-stranded RNAs such as poly(U). This chain is Pre-mRNA-splicing factor ATP-dependent RNA helicase-like protein PRP2 (PRP2), found in Saccharomyces cerevisiae (strain ATCC 204508 / S288c) (Baker's yeast).